The sequence spans 100 residues: Small ribosomal subunit protein uS14c (100 aa).

This sequence belongs to the universal ribosomal protein uS14 family. Part of the 30S ribosomal subunit.

Its subcellular location is the plastid. It localises to the chloroplast. Its function is as follows. Binds 16S rRNA, required for the assembly of 30S particles. The protein is Small ribosomal subunit protein uS14c of Tetradesmus obliquus (Green alga).